We begin with the raw amino-acid sequence, 282 residues long: Undecaprenyl-diphosphatase (282 aa).

A run of 8 helical transmembrane segments spans residues 2-22, 47-67, 90-110, 115-135, 152-172, 190-210, 225-245, and 259-279; these read FDFI…FLPV, FTAV…IQLY, WIKV…LNNF, LLNP…FIVI, ITFK…VPGT, FVAA…VTIL, AQLF…LFAI, and IFGW…IAGL.

It belongs to the UppP family.

It is found in the cell membrane. The catalysed reaction is di-trans,octa-cis-undecaprenyl diphosphate + H2O = di-trans,octa-cis-undecaprenyl phosphate + phosphate + H(+). Its function is as follows. Catalyzes the dephosphorylation of undecaprenyl diphosphate (UPP). Confers resistance to bacitracin. This is Undecaprenyl-diphosphatase from Leuconostoc citreum (strain KM20).